Consider the following 214-residue polypeptide: Adenylate kinase (214 aa).

Position 10–15 (10–15 (GAGKGT)) interacts with ATP. The tract at residues 30 to 59 (STGDMFRAALKNQTPLGLKAKEYMDKGELV) is NMP. AMP is bound by residues threonine 31, arginine 36, 57 to 59 (ELV), 85 to 88 (GFPR), and glutamine 92. Residues 126 to 163 (GRRVCRQCGATYHVKFNPPKVEGVCDACGGELYQRSDD) are LID. Arginine 127 provides a ligand contact to ATP. Positions 130 and 133 each coordinate Zn(2+). 136-137 (TY) is a binding site for ATP. The Zn(2+) site is built by cysteine 150 and cysteine 153. 2 residues coordinate AMP: arginine 160 and arginine 171. An ATP-binding site is contributed by lysine 199.

It belongs to the adenylate kinase family. As to quaternary structure, monomer.

It is found in the cytoplasm. The catalysed reaction is AMP + ATP = 2 ADP. The protein operates within purine metabolism; AMP biosynthesis via salvage pathway; AMP from ADP: step 1/1. In terms of biological role, catalyzes the reversible transfer of the terminal phosphate group between ATP and AMP. Plays an important role in cellular energy homeostasis and in adenine nucleotide metabolism. This is Adenylate kinase from Carboxydothermus hydrogenoformans (strain ATCC BAA-161 / DSM 6008 / Z-2901).